Consider the following 374-residue polypeptide: DNA replication and repair protein RecF (374 aa).

30–37 (GPNAQGKT) contacts ATP.

This sequence belongs to the RecF family.

It is found in the cytoplasm. In terms of biological role, the RecF protein is involved in DNA metabolism; it is required for DNA replication and normal SOS inducibility. RecF binds preferentially to single-stranded, linear DNA. It also seems to bind ATP. In Lactobacillus gasseri (strain ATCC 33323 / DSM 20243 / BCRC 14619 / CIP 102991 / JCM 1131 / KCTC 3163 / NCIMB 11718 / NCTC 13722 / AM63), this protein is DNA replication and repair protein RecF.